A 164-amino-acid chain; its full sequence is Protein-export protein SecB (164 aa).

The protein belongs to the SecB family. Homotetramer, a dimer of dimers. One homotetramer interacts with 1 SecA dimer.

It is found in the cytoplasm. Its function is as follows. One of the proteins required for the normal export of preproteins out of the cell cytoplasm. It is a molecular chaperone that binds to a subset of precursor proteins, maintaining them in a translocation-competent state. It also specifically binds to its receptor SecA. The sequence is that of Protein-export protein SecB from Chromohalobacter salexigens (strain ATCC BAA-138 / DSM 3043 / CIP 106854 / NCIMB 13768 / 1H11).